A 401-amino-acid chain; its full sequence is Histone acetyltransferase type B subunit 2 (401 aa).

WD repeat units lie at residues 116-147, 158-189, 206-237, 249-280, and 293-324; these read EHEEEITRARYMPQDPNIVATINGQGTVFLYS, FHKDNGYALSFSTLVKGRLLSGSDDHTVALWE, LHSDIINDNKWHNFNKDLFGTVSEDSLLKIND, KCPQPFNTLAFSHHSSNLLAAAGMDSYVYLYD, and GHEDAVNNLEFSTHVDGVVVSSGSDNRLMMWD. Residues 335–339 are interaction with the histone H4 N-terminus; that stretch reads DDAED. Residues 350-381 form a WD 6 repeat; sequence GHRSSVNDFDLNPQIPWLVASAEEENILQVWK.

It belongs to the WD repeat RBAP46/RBAP48/MSI1 family. As to quaternary structure, component of the HAT-B complex composed of at least HAT1 and HAT2. In the cytoplasm, this complex binds to the histone H4 tail. In the nucleus, the HAT-B complex has an additional component, the histone H3/H4 chaperone HIF1.

The protein resides in the cytoplasm. It is found in the nucleus. Functionally, regulatory subunit of the histone acetylase B (HAT-B) complex. The complex acetylates 'Lys-12' of histone H4 which is required for telomeric silencing. HAT2 is required for high affinity binding of the acetyltransferase to histone H4, for the nuclear location of HAT1 and for the HAT1-HIF1 interaction. Alone, it is unable to bind to H4, requiring HAT1 for high affinity interaction with the histone tail. HAT2 also has a HAT1 independent function in life-span regulation. The polypeptide is Histone acetyltransferase type B subunit 2 (HAT2) (Saccharomyces cerevisiae (strain ATCC 204508 / S288c) (Baker's yeast)).